We begin with the raw amino-acid sequence, 217 residues long: AFG2-interacting ribosome maturation factor (217 aa).

Part of the 55LCC heterohexameric ATPase complex composed at least of AIRIM, AFG2A, AFG2B and CINP. Does not associate with pre-60S ribosomal particles. Phosphorylated on serines by CK2 kinase.

It localises to the nucleus. The protein resides in the cytoplasm. Part of the 55LCC heterohexameric ATPase complex which is chromatin-associated and promotes replisome proteostasis to maintain replication fork progression and genome stability. Required for replication fork progression, sister chromatid cohesion, and chromosome stability. The ATPase activity is specifically enhanced by replication fork DNA and is coupled to cysteine protease-dependent cleavage of replisome substrates in response to replication fork damage. Uses ATPase activity to process replisome substrates in S-phase, facilitating their proteolytic turnover from chromatin to ensure DNA replication and mitotic fidelity. Involved in the cytoplasmic maturation steps of pre-60S ribosomal particles by promoting the release of shuttling protein RSL24D1/RLP24 from the pre-ribosomal particles. In Mus musculus (Mouse), this protein is AFG2-interacting ribosome maturation factor (Airim).